A 72-amino-acid polypeptide reads, in one-letter code: Phosphonoacetate hydrolase (72 aa).

As to quaternary structure, monomer. The cofactor is Unlike bacterial phosphonoacetate hydrolase, does not require zinc as a cofactor..

It catalyses the reaction phosphonoacetate + H2O = acetate + phosphate + H(+). Unaffected by EDTA or Ca(2+), Co(2+), Cu(2+), Mg(2+), Mn(2+), Ni(2+) and Zn(2+). The chain is Phosphonoacetate hydrolase from Penicillium oxalicum.